The primary structure comprises 552 residues: Urocanate hydratase (552 aa).

Residues 49-50 (GG), Q127, 173-175 (GMG), D193, 239-240 (NA), 260-264 (QTSAH), 270-271 (YI), and Y319 each bind NAD(+). Residue C407 is part of the active site. G489 contacts NAD(+).

This sequence belongs to the urocanase family. It depends on NAD(+) as a cofactor.

It is found in the cytoplasm. The enzyme catalyses 4-imidazolone-5-propanoate = trans-urocanate + H2O. The protein operates within amino-acid degradation; L-histidine degradation into L-glutamate; N-formimidoyl-L-glutamate from L-histidine: step 2/3. Its function is as follows. Catalyzes the conversion of urocanate to 4-imidazolone-5-propionate. This is Urocanate hydratase from Bacillus cereus (strain ATCC 14579 / DSM 31 / CCUG 7414 / JCM 2152 / NBRC 15305 / NCIMB 9373 / NCTC 2599 / NRRL B-3711).